A 183-amino-acid polypeptide reads, in one-letter code: Translocon-associated protein subunit beta (183 aa).

The first 17 residues, 1–17 (MRLLSFVVLALFAVTQA), serve as a signal peptide directing secretion. The Lumenal portion of the chain corresponds to 18-149 (EEGARLLASK…DRRFSPHFLD (132 aa)). Residues Asn88 and Asn104 are each glycosylated (N-linked (GlcNAc...) asparagine). The chain crosses the membrane as a helical span at residues 150–169 (WAAFGVMTLPSIGIPLLLWY). At 170–183 (SSKRKYDTPKTKKN) the chain is on the cytoplasmic side.

This sequence belongs to the TRAP-beta family. Heterotetramer of TRAP-alpha, TRAP-beta, TRAP-delta and TRAP-gamma. Interacts with STING1.

The protein resides in the endoplasmic reticulum membrane. Its function is as follows. TRAP proteins are part of a complex whose function is to bind calcium to the ER membrane and thereby regulate the retention of ER resident proteins. This chain is Translocon-associated protein subunit beta (SSR2), found in Homo sapiens (Human).